We begin with the raw amino-acid sequence, 249 residues long: MTVEDLKATVAKLQERIQYLEKKAGLVPDVPKSVRMVLIGPPGAGKGTQAPNLKEKFCACHLATGDMLRAQVAAKTALGVEAKKIMDQGGLVSDEIMVNMIKSELENNKECANGFILDGFPRTIPQAEKLDSMLVDRKTPLENAIELKIDDELLVARITGRLVHPASGRSYHKLFNPPKKNMIDDITGEPLVQRSDDNEAALKKRLVTYHKQTEPIVDYYRKTGIWSGIDASQKPATVWTDILKCLGQK.

43 to 48 (GAGKGT) serves as a coordination point for ATP. Positions 63–92 (ATGDMLRAQVAAKTALGVEAKKIMDQGGLV) are NMP. AMP-binding positions include threonine 64, arginine 69, 90 to 92 (GLV), 119 to 122 (GFPR), and glutamine 126. The segment at 160–197 (GRLVHPASGRSYHKLFNPPKKNMIDDITGEPLVQRSDD) is LID. ATP contacts are provided by residues arginine 161 and 170–171 (SY). AMP is bound by residues arginine 194 and arginine 205. ATP is bound at residue glutamine 233.

Belongs to the adenylate kinase family. AK2 subfamily. Monomer.

The protein resides in the cytoplasm. The protein localises to the cytosol. Its subcellular location is the mitochondrion intermembrane space. It carries out the reaction AMP + ATP = 2 ADP. Functionally, catalyzes the reversible transfer of the terminal phosphate group between ATP and AMP. Plays an important role in cellular energy homeostasis and in adenine nucleotide metabolism. Adenylate kinase activity is critical for regulation of the phosphate utilization and the AMP de novo biosynthesis pathways. In Scheffersomyces stipitis (strain ATCC 58785 / CBS 6054 / NBRC 10063 / NRRL Y-11545) (Yeast), this protein is Adenylate kinase.